The sequence spans 487 residues: Glycogen synthase (487 aa).

ADP-alpha-D-glucose is bound at residue Lys-19.

It belongs to the glycosyltransferase 1 family. Bacterial/plant glycogen synthase subfamily.

The enzyme catalyses [(1-&gt;4)-alpha-D-glucosyl](n) + ADP-alpha-D-glucose = [(1-&gt;4)-alpha-D-glucosyl](n+1) + ADP + H(+). It participates in glycan biosynthesis; glycogen biosynthesis. Its function is as follows. Synthesizes alpha-1,4-glucan chains using ADP-glucose. This is Glycogen synthase from Moorella thermoacetica (strain ATCC 39073 / JCM 9320).